We begin with the raw amino-acid sequence, 568 residues long: MNWQGWAEIAFILGLTVALGWPLGLFLARLWEGEQTWLDPVLKPVERLVYRACGIDPRQSQTWSSYALALLAFSAASFILLYAILRLQGWLPLNPQGFAGLPPHLAFNTAISFVSNTNWQSYVPEATVSAFSQMAGLTSHNFLSAAAGIAVAAAVTRAFAANREEGLGNFWVDLTRVSLYLLLPLSIVIALVFVALGEPQTLSAHVTATTLEGVQQTIALFPTASQEAIKQLGTNGGGIFNANSAHPFENPNPLTNLIEIVEMNVLGFACVVAFGRLVSARRDARALITVMAIFVAVAASVIYWTETRPAPALVGAQAEASVNMEGKEVRFGAPATAIWTAATTGASDGGVNAMFDSFMPLGGGMAMFMIQLGEILPGGVGSGLYGMIVLALIAVFVAGLMVGRTPEYLGKKVEAREVKYAMLAVLILPLAILGFSAAAAVLPVALEGLANTGAHGLSEILYAYSSATGNNGSAFAGFSANTPWWNTTLGIAMLLGRFGYVIPVLAIAGSLAAKPKLTVTAGTFPTDGPLFIGLLIGVILILGGLQFFPALALGPIVEHFQVLQALAR.

10 helical membrane passes run 7–27 (AEIAFILGLTVALGWPLGLFL), 65–85 (SYALALLAFSAASFILLYAIL), 135–155 (AGLTSHNFLSAAAGIAVAAAV), 177–197 (VSLYLLLPLSIVIALVFVALG), 254–274 (LTNLIEIVEMNVLGFACVVAF), 286–306 (ALITVMAIFVAVAASVIYWTE), 383–403 (GLYGMIVLALIAVFVAGLMVG), 422–442 (MLAVLILPLAILGFSAAAAVL), 489–509 (LGIAMLLGRFGYVIPVLAIAG), and 530–550 (LFIGLLIGVILILGGLQFFPA).

This sequence belongs to the KdpA family. In terms of assembly, the system is composed of three essential subunits: KdpA, KdpB and KdpC.

Its subcellular location is the cell inner membrane. Its function is as follows. Part of the high-affinity ATP-driven potassium transport (or Kdp) system, which catalyzes the hydrolysis of ATP coupled with the electrogenic transport of potassium into the cytoplasm. This subunit binds the periplasmic potassium ions and delivers the ions to the membrane domain of KdpB through an intramembrane tunnel. The chain is Potassium-transporting ATPase potassium-binding subunit from Beijerinckia indica subsp. indica (strain ATCC 9039 / DSM 1715 / NCIMB 8712).